Here is a 557-residue protein sequence, read N- to C-terminus: 2-isopropylmalate synthase (557 aa).

In terms of domain architecture, Pyruvate carboxyltransferase spans 33-307 (PLWLSTDLRD…DPGLDFSDID (275 aa)). Mg(2+) contacts are provided by Asp-42, His-246, His-248, and Asn-282. The regulatory domain stretch occupies residues 439–557 (AETPYALKGH…LGQQASIRAA (119 aa)).

It belongs to the alpha-IPM synthase/homocitrate synthase family. LeuA type 2 subfamily. As to quaternary structure, homodimer. The cofactor is Mg(2+).

It localises to the cytoplasm. The enzyme catalyses 3-methyl-2-oxobutanoate + acetyl-CoA + H2O = (2S)-2-isopropylmalate + CoA + H(+). It participates in amino-acid biosynthesis; L-leucine biosynthesis; L-leucine from 3-methyl-2-oxobutanoate: step 1/4. Its function is as follows. Catalyzes the condensation of the acetyl group of acetyl-CoA with 3-methyl-2-oxobutanoate (2-ketoisovalerate) to form 3-carboxy-3-hydroxy-4-methylpentanoate (2-isopropylmalate). The protein is 2-isopropylmalate synthase of Azotobacter vinelandii (strain DJ / ATCC BAA-1303).